Here is a 159-residue protein sequence, read N- to C-terminus: Succinate dehydrogenase [ubiquinone] cytochrome b small subunit, mitochondrial (159 aa).

Residues 1–36 (MATLWRLSVLCGARGGGALVLRTSVVRPAHVSAFLQ) constitute a mitochondrion transit peptide. The Mitochondrial matrix portion of the chain corresponds to 37–63 (DRHTPGWCGVQHIHLSPSHQASSKAAS). A helical transmembrane segment spans residues 64 to 85 (LHWTGERVVSVLLLGLLPAAYL). Topologically, residues 86–90 (NPCSA) are mitochondrial intermembrane. Residues 91-111 (MDYSLAAALTLHGHWGIGQVV) form a helical membrane-spanning segment. Residue H102 coordinates heme b. The Mitochondrial matrix segment spans residues 112–120 (TDYVRGDAL). Position 114 (Y114) interacts with a ubiquinone. A helical transmembrane segment spans residues 121–142 (QKVAKAGLLALSAFTFAGLCYF). The Mitochondrial intermembrane segment spans residues 143 to 159 (NYHDVGICKAVAMLWKL).

The protein belongs to the CybS family. As to quaternary structure, component of complex II composed of four subunits: the flavoprotein (FP) SDHA, iron-sulfur protein (IP) SDHB, and a cytochrome b560 composed of SDHC and SDHD.

It is found in the mitochondrion inner membrane. The protein operates within carbohydrate metabolism; tricarboxylic acid cycle. Its function is as follows. Membrane-anchoring subunit of succinate dehydrogenase (SDH) that is involved in complex II of the mitochondrial electron transport chain and is responsible for transferring electrons from succinate to ubiquinone (coenzyme Q). SDH also oxidizes malate to the non-canonical enol form of oxaloacetate, enol-oxaloacetate. Enol-oxaloacetate, which is a potent inhibitor of the succinate dehydrogenase activity, is further isomerized into keto-oxaloacetate. This chain is Succinate dehydrogenase [ubiquinone] cytochrome b small subunit, mitochondrial (SDHD), found in Sus scrofa (Pig).